The primary structure comprises 1004 residues: Ovochymase-2 (1004 aa).

The signal sequence occupies residues 1–19 (MPTRNLLLGSILLSLAVKG). The propeptide at 20 to 45 (DPGPHRGARCGVSPLGSATELNYLSR) is activation peptide. Residues 46–295 (IVGGRESKKG…LLGWVSSQLN (250 aa)) form the Peptidase S1 1 domain. C71 and C87 are oxidised to a cystine. Catalysis depends on H86, which acts as the Charge relay system. Position 113 (E113) interacts with Ca(2+). N128 carries an N-linked (GlcNAc...) asparagine glycan. The Charge relay system role is filled by D136. 3 cysteine pairs are disulfide-bonded: C170–C240, C201–C219, and C230–C259. S234 serves as the catalytic Charge relay system. CUB domains are found at residues 309–419 (QDGV…YSAV) and 429–541 (CGSF…FTFV). N351 carries an N-linked (GlcNAc...) asparagine glycan. C363 and C382 form a disulfide bridge. N408 carries N-linked (GlcNAc...) asparagine glycosylation. 2 cysteine pairs are disulfide-bonded: C429–C456 and C483–C504. The span at 547–558 (VEDSRQGNMPST) shows a compositional bias: polar residues. Residues 547–566 (VEDSRQGNMPSTNKKETTAQ) are disordered. The 241-residue stretch at 580 to 820 (IYNSIAKVEE…FIDWIRQIMS (241 aa)) folds into the Peptidase S1 2 domain. The propeptide at 584 to 1004 (IAKVEEAVPH…VVPDSDSSEP (421 aa)) is activation peptide. Cystine bridges form between C609/C625, C706/C776, C737/C754, and C766/C796. An N-linked (GlcNAc...) asparagine glycan is attached at N763. The N-linked (GlcNAc...) asparagine glycan is linked to N940.

It belongs to the peptidase S1 family. Post-translationally, the catalytically inactive 110 kDa form is processed both N- and C-terminally to give rise to the 66 kDa catalytically active form. In terms of tissue distribution, specifically expressed in the pars recta oviduct.

It is found in the secreted. The catalysed reaction is Preferential cleavage at 371-Gly-Ser-Arg-|-Trp-374 of glycoprotein gp43 in Xenopus laevis coelemic egg envelope to yield gp41.. In terms of biological role, converts the glycoprotein envelope surrounding the egg from an unfertilizable to a fertilizable form during its transit through the pars recta portion of the oviduct by selectively hydrolyzing the envelope glycoprotein gp43. The egg envelope is converted to a sperm-penetrable form, via an increase in sperm binding. The polypeptide is Ovochymase-2 (ovch2) (Xenopus laevis (African clawed frog)).